The sequence spans 179 residues: Large ribosomal subunit protein uL5 (179 aa).

This sequence belongs to the universal ribosomal protein uL5 family. In terms of assembly, part of the 50S ribosomal subunit; part of the 5S rRNA/L5/L18/L25 subcomplex. Contacts the 5S rRNA and the P site tRNA. Forms a bridge to the 30S subunit in the 70S ribosome.

Functionally, this is one of the proteins that bind and probably mediate the attachment of the 5S RNA into the large ribosomal subunit, where it forms part of the central protuberance. In the 70S ribosome it contacts protein S13 of the 30S subunit (bridge B1b), connecting the 2 subunits; this bridge is implicated in subunit movement. Contacts the P site tRNA; the 5S rRNA and some of its associated proteins might help stabilize positioning of ribosome-bound tRNAs. This Pseudomonas putida (strain ATCC 700007 / DSM 6899 / JCM 31910 / BCRC 17059 / LMG 24140 / F1) protein is Large ribosomal subunit protein uL5.